The following is a 171-amino-acid chain: S-ribosylhomocysteine lyase (171 aa).

Fe cation contacts are provided by His-54, His-58, and Cys-128.

It belongs to the LuxS family. As to quaternary structure, homodimer. Fe cation is required as a cofactor.

It catalyses the reaction S-(5-deoxy-D-ribos-5-yl)-L-homocysteine = (S)-4,5-dihydroxypentane-2,3-dione + L-homocysteine. In terms of biological role, involved in the synthesis of autoinducer 2 (AI-2) which is secreted by bacteria and is used to communicate both the cell density and the metabolic potential of the environment. The regulation of gene expression in response to changes in cell density is called quorum sensing. Catalyzes the transformation of S-ribosylhomocysteine (RHC) to homocysteine (HC) and 4,5-dihydroxy-2,3-pentadione (DPD). The protein is S-ribosylhomocysteine lyase of Pectobacterium atrosepticum (strain SCRI 1043 / ATCC BAA-672) (Erwinia carotovora subsp. atroseptica).